A 61-amino-acid chain; its full sequence is Small ribosomal subunit protein uS14B (61 aa).

Zn(2+)-binding residues include Cys24, Cys27, Cys40, and Cys43.

This sequence belongs to the universal ribosomal protein uS14 family. Zinc-binding uS14 subfamily. In terms of assembly, part of the 30S ribosomal subunit. Contacts proteins S3 and S10. Zn(2+) serves as cofactor.

Binds 16S rRNA, required for the assembly of 30S particles and may also be responsible for determining the conformation of the 16S rRNA at the A site. This Mycobacterium ulcerans (strain Agy99) protein is Small ribosomal subunit protein uS14B.